Consider the following 349-residue polypeptide: uncharacterized protein (349 aa).

One can recognise a THUMP domain in the interval 51-160 (NIIKENKNNL…QDESYISIFQ (110 aa)).

This is an uncharacterized protein from Methanocaldococcus jannaschii (strain ATCC 43067 / DSM 2661 / JAL-1 / JCM 10045 / NBRC 100440) (Methanococcus jannaschii).